Here is a 384-residue protein sequence, read N- to C-terminus: Glucans biosynthesis protein C (384 aa).

10 helical membrane passes run 17–37, 54–74, 91–111, 140–160, 173–193, 212–232, 240–260, 274–294, 311–331, and 338–358; these read AWLM…THSW, FIHA…SYML, VGIP…ILLQ, LWFL…FTWF, AISL…YAAI, FIVM…LAFI, FTTP…AYLL, TESV…FSLG, ASLF…AYIT, and LIGF…LYEI.

Belongs to the acyltransferase 3 family. OpgC subfamily.

It localises to the cell membrane. It participates in glycan metabolism; osmoregulated periplasmic glucan (OPG) biosynthesis. Necessary for the succinyl substitution of periplasmic glucans. Could catalyze the transfer of succinyl residues from the cytoplasmic side of the membrane to the nascent glucan backbones on the periplasmic side of the membrane. The chain is Glucans biosynthesis protein C from Salmonella typhi.